The following is a 468-amino-acid chain: 6-phospho-beta-galactosidase (468 aa).

Positions 19, 116, 159, 160, and 297 each coordinate D-galactose 6-phosphate. Residue E160 is the Proton donor of the active site. The Nucleophile role is filled by E375. Positions 428, 429, 435, and 437 each coordinate D-galactose 6-phosphate.

This sequence belongs to the glycosyl hydrolase 1 family.

It catalyses the reaction a 6-phospho-beta-D-galactoside + H2O = D-galactose 6-phosphate + an alcohol. Its pathway is carbohydrate metabolism; lactose degradation; D-galactose 6-phosphate and beta-D-glucose from lactose 6-phosphate: step 1/1. The protein is 6-phospho-beta-galactosidase of Streptococcus gordonii (strain Challis / ATCC 35105 / BCRC 15272 / CH1 / DL1 / V288).